Here is a 201-residue protein sequence, read N- to C-terminus: Increased recombination centers protein 21 (201 aa).

The 79-residue stretch at 122–200 (PLRINRKIVK…LQVCFIGVVC (79 aa)) folds into the Cytochrome b5 heme-binding domain. Heme is bound by residues His158 and His182.

It belongs to the cytochrome b5 family.

Its function is as follows. Involved in resistance to carboplatin and cisplatin. Is probably involved in a pathway contributing to genomic integrity. This is Increased recombination centers protein 21 (IRC21) from Saccharomyces cerevisiae (strain ATCC 204508 / S288c) (Baker's yeast).